The sequence spans 351 residues: Methylthioribose-1-phosphate isomerase (351 aa).

D244 serves as the catalytic Proton donor.

It belongs to the eIF-2B alpha/beta/delta subunits family. MtnA subfamily.

Its subcellular location is the cytoplasm. The protein localises to the nucleus. The catalysed reaction is 5-(methylsulfanyl)-alpha-D-ribose 1-phosphate = 5-(methylsulfanyl)-D-ribulose 1-phosphate. It functions in the pathway amino-acid biosynthesis; L-methionine biosynthesis via salvage pathway; L-methionine from S-methyl-5-thio-alpha-D-ribose 1-phosphate: step 1/6. Functionally, catalyzes the interconversion of methylthioribose-1-phosphate (MTR-1-P) into methylthioribulose-1-phosphate (MTRu-1-P). The chain is Methylthioribose-1-phosphate isomerase from Anopheles gambiae (African malaria mosquito).